The following is a 56-amino-acid chain: PI-stichotoxin-Hmg3c (56 aa).

One can recognise a BPTI/Kunitz inhibitor domain in the interval Cys4 to Cys54. Intrachain disulfides connect Cys4/Cys54, Cys13/Cys37, and Cys29/Cys50.

It belongs to the venom Kunitz-type family. Sea anemone type 2 potassium channel toxin subfamily. Post-translationally, contains three disulfide bonds.

The protein resides in the secreted. It is found in the nematocyst. Serine protease inhibitor that inhibits trypsin (Ki=73.8 nM) and chymotrypsin (Ki=993 nM). The polypeptide is PI-stichotoxin-Hmg3c (Heteractis magnifica (Magnificent sea anemone)).